A 249-amino-acid chain; its full sequence is Phycobilisome 27.9 kDa linker polypeptide, phycoerythrin-associated, rod (249 aa).

The PBS-linker domain maps to 2-166 (ASQTILELWP…LDRGPAQIDS (165 aa)). A CpcD-like domain is found at 198–248 (EKRFKILVQGSKFDSPRRISTTEYIVPASKMTPQIQRINRTSGKIVSITEI).

This sequence belongs to the phycobilisome linker protein family. As to quaternary structure, the phycobilisome is a hemidiscoidal structure that is composed of two distinct substructures: a core complex and six rods radiating from the core.

Its subcellular location is the cellular thylakoid membrane. In terms of biological role, rod linker protein, associated with phycoerythrin. Linker polypeptides determine the state of aggregation and the location of the disk-shaped phycobiliprotein units within the phycobilisome and modulate their spectroscopic properties in order to mediate a directed and optimal energy transfer. This Microchaete diplosiphon (Fremyella diplosiphon) protein is Phycobilisome 27.9 kDa linker polypeptide, phycoerythrin-associated, rod (cpeD).